The chain runs to 1072 residues: MNSMDRHIQQTNDRLQCIKQHLQNPANFHNAATELLDWCGDPRAFQRPFEQSLMGCLTVVSRVAAQQGFDLDLGYRLLAVCAANRDKFTPKSAALLSSWCEELGRLLLLRHQKSRQNDPPGKLPMQPPLSSMSSMKPTLSHSDGSFPYDSVPWQQNTNQPPGSLSVVTTVWGVTNTSQSQVLGNPMANANNPMNPGGNPMASGMSTSNPGINSPQFAGQQQQFSTKAGPAQPYIQPNMYGRPGYPGSGGFGASYPGGPSAPAGMGIPPHTRPPADFTQPAAAAAAAAVAAAAATATATATATVAALQETQNKDINQYGPVCSSFQMGPTQAYNSQFMNQPGPRGPASMGGSLNPAGMAAGMTPSGMSGPPMGMNQPRPPGISPFGTHGQRMPQQTYPGPRPQSLPIQSIKRPYPGEPNYGNQQYGPNSQFPTQPGQYPTPNPPRPLTSPNYPGQRMPSQPSTGQYPPPTVNMGQYYKPEQFNGQNNTFSSGSSYSSYSQGSVNRPPRPVPVANYPHSPVPGNPTPPMTPGSSIPPYLSPSQDVKPPFPPDIKPNMSALPPPPANHNDELRLTFPVRDGVVLEPFRLEHNLAVSNHVFHLRPTVHQTLMWRSDLELQFKCYHHEDRQMNTNWPASVQVSVNATPLTIERGDNKTSHKPLHLKHVCQPGRNTIQITVTACCCSHLFVLQLVHRPSVRSVLQGLLKKRLLPAEHCITKIKRNFSSVAASSGNTTLNGEDGVEQTAIKVSLKCPITFRRIQLPARGHDCKHVQCFDLESYLQLNCERGTWRCPVCNKTALLEGLEVDQYMWGILNAIQHSEFEEVTIDPTCSWRPVPIKSDLHIKDDPDGIPSKRFKTMSPSQMIMPNVMEMIAALGPGPSPYPLPPPPGGTSSNDYSSQGNNYQGHGNFDFPHGNPGGTSMNDFMHGPPQLSHPPDMPNNMAALEKPLSHPMQETMPHAGSSDQPHPSIQQGLHVPHPSSQAGPPLHHSGAPPPSQPPRQPPQAAPGNHPHSDLTFNPSSALEGQAGAQGASDMPEPSLDLLPELTNPDELLSYLDPPDLPSNSNDDLLSLFENN.

Positions 1–120 are sufficient for transactivation activity; sufficient for interaction with NOTCH1; sequence MNSMDRHIQQ…HQKSRQNDPP (120 aa). Lys-91 is covalently cross-linked (Glycyl lysine isopeptide (Lys-Gly) (interchain with G-Cter in SUMO2)). 2 disordered regions span residues 112–141 and 362–538; these read QKSRQNDPPGKLPMQPPLSSMSSMKPTLSH and TPSG…PYLS. Over residues 128–141 the composition is skewed to low complexity; the sequence is PLSSMSSMKPTLSH. The segment covering 419-436 has biased composition (polar residues); the sequence is YGNQQYGPNSQFPTQPGQ. Residues 437-446 show a composition bias toward pro residues; it reads YPTPNPPRPL. Residues 489–501 are compositionally biased toward low complexity; that stretch reads SSGSSYSSYSQGS. Over residues 517–528 the composition is skewed to pro residues; it reads SPVPGNPTPPMT. Residues 734 to 815 form an SP-RING-type zinc finger; it reads GEDGVEQTAI…MWGILNAIQH (82 aa). Cys-765, His-767, Cys-788, and Cys-791 together coordinate Zn(2+). Residues Lys-841 and Lys-850 each participate in a glycyl lysine isopeptide (Lys-Gly) (interchain with G-Cter in SUMO2) cross-link. The interval 844–1072 is transactivation domain; the sequence is PDGIPSKRFK…DDLLSLFENN (229 aa). Over residues 875–886 the composition is skewed to pro residues; sequence GPSPYPLPPPPG. The interval 875-1072 is disordered; it reads GPSPYPLPPP…DDLLSLFENN (198 aa). Polar residues-rich tracts occupy residues 888 to 902 and 958 to 968; these read TSSNDYSSQGNNYQG and SSDQPHPSIQQ. Over residues 988-1001 the composition is skewed to pro residues; the sequence is APPPSQPPRQPPQA. The span at 1045 to 1072 shows a compositional bias: low complexity; it reads PDELLSYLDPPDLPSNSNDDLLSLFENN.

As to quaternary structure, interacts with AR, but not with ESR1, NR3C1, PGR, THRB nor VDR. Interacts with NOTCH1 and RBPJ. Interacts with SMARCA4. Interacts (via SP-RING-type domain) with SMAD3 and SMAD4 (via MH2 domain). As to expression, expressed in brain.

Its subcellular location is the nucleus. It localises to the nucleoplasm. The protein resides in the cytoplasm. Its function is as follows. Acts as a transcriptional coactivator. Increases ligand-dependent transcriptional activity of AR and promotes AR sumoylation. The stimulation of AR activity is dependent upon sumoylation. Also functions as a transcriptional coactivator in the TGF-beta signaling pathway by increasing the activity of the SMAD3/SMAD4 transcriptional complex. Involved in transcriptional activation of a subset of NOTCH1 target genes including MYC. Involved in thymocyte and T cell development. Involved in the regulation of postmitotic positioning of pyramidal neurons in the developing cerebral cortex. The protein is Zinc finger MIZ domain-containing protein 1 (Zmiz1) of Mus musculus (Mouse).